Consider the following 573-residue polypeptide: Dihydroxy-acid dehydratase (573 aa).

A compositionally biased stretch (basic and acidic residues) spans 1-14; it reads MTEKSPKPHKRSDA. Positions 1–21 are disordered; sequence MTEKSPKPHKRSDAITEGPNR. Residue Cys55 participates in [2Fe-2S] cluster binding. Residue Asp87 coordinates Mg(2+). Cys128 lines the [2Fe-2S] cluster pocket. 2 residues coordinate Mg(2+): Asp129 and Lys130. Lys130 carries the post-translational modification N6-carboxylysine. [2Fe-2S] cluster is bound at residue Cys200. Glu450 lines the Mg(2+) pocket. Ser476 functions as the Proton acceptor in the catalytic mechanism.

Belongs to the IlvD/Edd family. As to quaternary structure, homodimer. [2Fe-2S] cluster serves as cofactor. Mg(2+) is required as a cofactor.

It catalyses the reaction (2R)-2,3-dihydroxy-3-methylbutanoate = 3-methyl-2-oxobutanoate + H2O. It carries out the reaction (2R,3R)-2,3-dihydroxy-3-methylpentanoate = (S)-3-methyl-2-oxopentanoate + H2O. The protein operates within amino-acid biosynthesis; L-isoleucine biosynthesis; L-isoleucine from 2-oxobutanoate: step 3/4. It functions in the pathway amino-acid biosynthesis; L-valine biosynthesis; L-valine from pyruvate: step 3/4. Functions in the biosynthesis of branched-chain amino acids. Catalyzes the dehydration of (2R,3R)-2,3-dihydroxy-3-methylpentanoate (2,3-dihydroxy-3-methylvalerate) into 2-oxo-3-methylpentanoate (2-oxo-3-methylvalerate) and of (2R)-2,3-dihydroxy-3-methylbutanoate (2,3-dihydroxyisovalerate) into 2-oxo-3-methylbutanoate (2-oxoisovalerate), the penultimate precursor to L-isoleucine and L-valine, respectively. The protein is Dihydroxy-acid dehydratase of Koribacter versatilis (strain Ellin345).